The chain runs to 185 residues: dCTP deaminase (185 aa).

Residues lysine 107–arginine 112, threonine 131–glutamate 133, glutamine 152, tyrosine 166, and glutamine 176 each bind dCTP. The active-site Proton donor/acceptor is glutamate 133.

This sequence belongs to the dCTP deaminase family. As to quaternary structure, homotrimer.

It catalyses the reaction dCTP + H2O + H(+) = dUTP + NH4(+). It functions in the pathway pyrimidine metabolism; dUMP biosynthesis; dUMP from dCTP (dUTP route): step 1/2. Its function is as follows. Catalyzes the deamination of dCTP to dUTP. In Anaplasma phagocytophilum (strain HZ), this protein is dCTP deaminase.